We begin with the raw amino-acid sequence, 124 residues long: Alpha-amylase inhibitor 0.19 (124 aa).

5 cysteine pairs are disulfide-bonded: Cys6-Cys52, Cys20-Cys41, Cys28-Cys83, Cys42-Cys99, and Cys54-Cys115.

It belongs to the protease inhibitor I6 (cereal trypsin/alpha-amylase inhibitor) family. As to quaternary structure, homodimer. The disulfide bonds are essential for the inhibitor activity. Endosperm.

It is found in the secreted. Its function is as follows. Alpha-amylase inhibitor. The protein is Alpha-amylase inhibitor 0.19 of Triticum aestivum (Wheat).